A 293-amino-acid polypeptide reads, in one-letter code: B1-hordein (293 aa).

Positions 1–19 are cleaved as a signal peptide; sequence MKTFLIFALLAIAATSTIA. Positions 20-90 are disordered; that stretch reads QQQPFPQQPI…PPFWQQKPFP (71 aa). Residues 25–81 are compositionally biased toward pro residues; sequence PQQPIPQQPQPYPQQPQPYPQQPFPPQQPFPQQPVPQQPQPYPQQPFPPQQPFPQQP.

This sequence belongs to the gliadin/glutenin family. Developing endosperm.

Sulfur-rich seed storage protein. The protein is B1-hordein of Hordeum vulgare (Barley).